Reading from the N-terminus, the 212-residue chain is MQVLVASRNKKKLAELQRVLAAANVEGIELLSLADVPEYPETPETGATFEANARIKALDGVRNAGLPTVADDSGLAVDALNGMPGVLSARWCGAHGEDAENNRLLLAQLSDVPDDRRGARFVSSCVLAVPAEIADAADLEPEVAVTGEWEGRILRAEQGTNGFGYDPLFEPAEAPGQSSAELTPERKDELSHRGKALQQLVPALRVLAQSAQ.

A substrate-binding site is contributed by 7–12 (SRNKKK). D72 acts as the Proton acceptor in catalysis. Residue D72 participates in Mg(2+) binding. Substrate-binding positions include S73, 163 to 166 (FGYD), K187, and 192 to 193 (HR). A disordered region spans residues 164–194 (GYDPLFEPAEAPGQSSAELTPERKDELSHRG). The span at 183–192 (TPERKDELSH) shows a compositional bias: basic and acidic residues.

It belongs to the HAM1 NTPase family. In terms of assembly, homodimer. It depends on Mg(2+) as a cofactor.

It carries out the reaction XTP + H2O = XMP + diphosphate + H(+). The catalysed reaction is dITP + H2O = dIMP + diphosphate + H(+). It catalyses the reaction ITP + H2O = IMP + diphosphate + H(+). Its function is as follows. Pyrophosphatase that catalyzes the hydrolysis of nucleoside triphosphates to their monophosphate derivatives, with a high preference for the non-canonical purine nucleotides XTP (xanthosine triphosphate), dITP (deoxyinosine triphosphate) and ITP. Seems to function as a house-cleaning enzyme that removes non-canonical purine nucleotides from the nucleotide pool, thus preventing their incorporation into DNA/RNA and avoiding chromosomal lesions. The chain is dITP/XTP pyrophosphatase from Corynebacterium urealyticum (strain ATCC 43042 / DSM 7109).